Here is a 248-residue protein sequence, read N- to C-terminus: MAPGAPSSSPSPILAVLLFSSLVLSPAQAIVVYTDREVHGAVGSRVTLHCSFWSSEWVSDDISFTWRYQPEGGRDAISIFHYAKGQPYIDEVGTFKERIQWVGDPRWKDGSIVIHNLDYSDNGTFTCDVKNPPDIVGKTSQVTLYVFEKVPTRYGVVLGAVIGGVLGVVLLLLLLFYVVRYCWLRRQAALQRRLSAMEKGKLHKPGKDASKRGRQTPVLYAMLDHSRSTKAVSEKKAKGLGESRKDKK.

The N-terminal stretch at M1 to A29 is a signal peptide. The Ig-like V-type domain occupies I30–T143. The Extracellular portion of the chain corresponds to I30–R153. C50 and C127 are disulfide-bonded. N122 carries an N-linked (GlcNAc...) (complex) asparagine glycan. The helical transmembrane segment at Y154 to V179 threads the bilayer. The Cytoplasmic portion of the chain corresponds to R180–K248. S210 bears the Phosphoserine; by PKC mark. The tract at residues D224–K248 is disordered. Residues S226 and S228 each carry the phosphoserine modification. 2 positions are modified to phosphoserine; by PKC: S233 and S243.

Belongs to the myelin P0 protein family. As to quaternary structure, homodimer and homotetramer. In terms of processing, N-glycosylated; contains sulfate-substituted glycan. Found only in peripheral nervous system Schwann cells.

The protein localises to the cell membrane. It localises to the myelin membrane. Functionally, is an adhesion molecule necessary for normal myelination in the peripheral nervous system. It mediates adhesion between adjacent myelin wraps and ultimately drives myelin compaction. The polypeptide is Myelin protein P0 (MPZ) (Homo sapiens (Human)).